Reading from the N-terminus, the 231-residue chain is Octanoyltransferase (231 aa).

The 179-residue stretch at 49-227 (PHLPEAVWLL…ALAARFHLAW (179 aa)) folds into the BPL/LPL catalytic domain. Substrate-binding positions include 91–98 (RGGEVTHH), 158–160 (AIG), and 171–173 (GLA). Residue C189 is the Acyl-thioester intermediate of the active site.

The protein belongs to the LipB family.

The protein localises to the cytoplasm. The enzyme catalyses octanoyl-[ACP] + L-lysyl-[protein] = N(6)-octanoyl-L-lysyl-[protein] + holo-[ACP] + H(+). It functions in the pathway protein modification; protein lipoylation via endogenous pathway; protein N(6)-(lipoyl)lysine from octanoyl-[acyl-carrier-protein]: step 1/2. In terms of biological role, catalyzes the transfer of endogenously produced octanoic acid from octanoyl-acyl-carrier-protein onto the lipoyl domains of lipoate-dependent enzymes. Lipoyl-ACP can also act as a substrate although octanoyl-ACP is likely to be the physiological substrate. The polypeptide is Octanoyltransferase (Parasynechococcus marenigrum (strain WH8102)).